Here is an 82-residue protein sequence, read N- to C-terminus: Protein WFDC11 (82 aa).

Positions 1–21 (MKPSWFPCLVFLCMLLLSALG) are cleaved as a signal peptide.

Its subcellular location is the secreted. The chain is Protein WFDC11 (Wfdc11) from Mus musculus (Mouse).